A 321-amino-acid chain; its full sequence is Glucokinase (321 aa).

Residue 8 to 13 (GDVGGT) participates in ATP binding.

It belongs to the bacterial glucokinase family.

The protein localises to the cytoplasm. The enzyme catalyses D-glucose + ATP = D-glucose 6-phosphate + ADP + H(+). This chain is Glucokinase, found in Enterobacter sp. (strain 638).